A 383-amino-acid polypeptide reads, in one-letter code: Acetylornithine deacetylase (383 aa).

Position 80 (His-80) interacts with Zn(2+). Residue Asp-82 is part of the active site. Asp-112 serves as a coordination point for Zn(2+). Glu-144 is a catalytic residue. Zn(2+) contacts are provided by Glu-145, Glu-169, and His-355.

It belongs to the peptidase M20A family. ArgE subfamily. As to quaternary structure, homodimer. Requires Zn(2+) as cofactor. The cofactor is Co(2+). Glutathione is required as a cofactor.

The protein localises to the cytoplasm. The enzyme catalyses N(2)-acetyl-L-ornithine + H2O = L-ornithine + acetate. Its pathway is amino-acid biosynthesis; L-arginine biosynthesis; L-ornithine from N(2)-acetyl-L-ornithine (linear): step 1/1. Catalyzes the hydrolysis of the amide bond of N(2)-acetylated L-amino acids. Cleaves the acetyl group from N-acetyl-L-ornithine to form L-ornithine, an intermediate in L-arginine biosynthesis pathway, and a branchpoint in the synthesis of polyamines. The polypeptide is Acetylornithine deacetylase (Escherichia coli (strain K12 / MC4100 / BW2952)).